The primary structure comprises 174 residues: UPF0664 stress-induced protein C29B12.11c (174 aa).

Positions 147-174 (HLDPLPPYHRPSSSQDQPPHYEEAVNKS) are disordered. Residues 165–174 (PHYEEAVNKS) show a composition bias toward basic and acidic residues.

Belongs to the UPF0664 family.

Its subcellular location is the cytoplasm. It is found in the nucleus. The protein is UPF0664 stress-induced protein C29B12.11c of Schizosaccharomyces pombe (strain 972 / ATCC 24843) (Fission yeast).